The sequence spans 1233 residues: Structural maintenance of chromosomes protein 1A (1233 aa).

32-39 contacts ATP; it reads GPNGSGKS. 2 coiled-coil regions span residues 104-124 and 163-503; these read EYKI…LEKL and ELAQ…KAEI. A compositionally biased stretch (basic and acidic residues) spans 284–293; sequence IKEKDSELNQ. Disordered regions lie at residues 284 to 308 and 348 to 369; these read IKEK…TSHK and QEFE…TLEE. Phosphoserine occurs at positions 358 and 360. One can recognise an SMC hinge domain in the interval 515–629; it reads VYGRLIDLCQ…DNVEDARRIA (115 aa). An N6-acetyllysine mark is found at Lys-648 and Lys-713. A coiled-coil region spans residues 660–935; that stretch reads KAKARRWDEK…RHNLLQACKM (276 aa). A disordered region spans residues 947 to 968; the sequence is MDDISQEEGSSQGEDSVSGSQR. Residues 953–967 are compositionally biased toward low complexity; it reads EEGSSQGEDSVSGSQ. Phosphoserine occurs at positions 957, 962, 966, and 970. Residues 991–1068 adopt a coiled-coil conformation; it reads KDAQAEEEIK…FEQIKKERFD (78 aa). Lys-1037 is subject to N6-acetyllysine.

This sequence belongs to the SMC family. SMC1 subfamily. As to quaternary structure, forms a heterodimer with SMC3 in cohesin complexes. Cohesin complexes are composed of the SMC1 (SMC1A or meiosis-specific SMC1B) and SMC3 heterodimer attached via their SMC hinge domain, RAD21 which link them, and one STAG protein (STAG1, STAG2 or meiosis-specific STAG3), which interacts with RAD21. In germ cell cohesin complexes, SMC1A is mutually exclusive with SMC1B. Found in a complex with CDCA5, SMC3 and RAD21, PDS5A/SCC-112 and PDS5B/APRIN. Interacts with NDC80, SYCP2, STAG3, BRCA1 and BRAT1. The cohesin complex interacts with the cohesin loading complex subunits NIPBL/Scc2 (via HEAT repeats) and MAU2/Scc4. NIPBL directly contacts all members of the complex, RAD21, SMC1A/B, SMC3 and STAG1. Interacts with RPGR. Found in a complex containing POLE and SMC3. Post-translationally, phosphorylated upon ionizing radiation or DNA methylation. Phosphorylation of Ser-957 and Ser-966 activates it and is required for S-phase checkpoint activation. Ubiquitinated by the DCX(DCAF15) complex, leading to its degradation.

Its subcellular location is the nucleus. The protein localises to the chromosome. It is found in the centromere. Its function is as follows. Involved in chromosome cohesion during cell cycle and in DNA repair. Involved in DNA repair via its interaction with BRCA1 and its related phosphorylation by ATM, and works as a downstream effector in the ATM/NBS1 branch of S-phase checkpoint. Central component of cohesin complex. The cohesin complex is required for the cohesion of sister chromatids after DNA replication. The cohesin complex apparently forms a large proteinaceous ring within which sister chromatids can be trapped. At anaphase, the complex is cleaved and dissociates from chromatin, allowing sister chromatids to segregate. The cohesin complex may also play a role in spindle pole assembly during mitosis. Involved in DNA repair via its interaction with BRCA1 and its related phosphorylation by ATM, or via its phosphorylation by ATR. Works as a downstream effector both in the ATM/NBS1 branch and in the ATR/MSH2 branch of S-phase checkpoint. This chain is Structural maintenance of chromosomes protein 1A (SMC1A), found in Bos taurus (Bovine).